Here is a 215-residue protein sequence, read N- to C-terminus: Protein-L-isoaspartate O-methyltransferase (215 aa).

The active site involves Ser62.

This sequence belongs to the methyltransferase superfamily. L-isoaspartyl/D-aspartyl protein methyltransferase family.

Its subcellular location is the cytoplasm. The enzyme catalyses [protein]-L-isoaspartate + S-adenosyl-L-methionine = [protein]-L-isoaspartate alpha-methyl ester + S-adenosyl-L-homocysteine. Catalyzes the methyl esterification of L-isoaspartyl residues in peptides and proteins that result from spontaneous decomposition of normal L-aspartyl and L-asparaginyl residues. It plays a role in the repair and/or degradation of damaged proteins. This chain is Protein-L-isoaspartate O-methyltransferase, found in Rhodopseudomonas palustris (strain BisA53).